A 392-amino-acid chain; its full sequence is Putative cystathionine gamma-lyase (392 aa).

The segment covering 1-10 has biased composition (polar residues); that stretch reads MSDSATTDSA. Residues 1–41 are disordered; sequence MSDSATTDSAGTGGERSASAPGDGTRAVRAGLPEPVKHEPT. Position 216 is an N6-(pyridoxal phosphate)lysine (lysine 216).

The protein belongs to the trans-sulfuration enzymes family. Requires pyridoxal 5'-phosphate as cofactor.

The protein localises to the cytoplasm. The catalysed reaction is L,L-cystathionine + H2O = 2-oxobutanoate + L-cysteine + NH4(+). The protein operates within amino-acid biosynthesis; L-cysteine biosynthesis; L-cysteine from L-homocysteine and L-serine: step 2/2. In Streptomyces coelicolor (strain ATCC BAA-471 / A3(2) / M145), this protein is Putative cystathionine gamma-lyase (cysA).